The sequence spans 101 residues: Urease subunit beta (101 aa).

It belongs to the urease beta subunit family. In terms of assembly, heterotrimer of UreA (gamma), UreB (beta) and UreC (alpha) subunits. Three heterotrimers associate to form the active enzyme.

The protein resides in the cytoplasm. The enzyme catalyses urea + 2 H2O + H(+) = hydrogencarbonate + 2 NH4(+). It participates in nitrogen metabolism; urea degradation; CO(2) and NH(3) from urea (urease route): step 1/1. This chain is Urease subunit beta, found in Rhizobium etli (strain ATCC 51251 / DSM 11541 / JCM 21823 / NBRC 15573 / CFN 42).